Reading from the N-terminus, the 399-residue chain is Multi-drug resistance efflux pump PmrA (399 aa).

A run of 10 helical transmembrane segments spans residues 12 to 34 (IAWF…MPIF), 49 to 71 (AGLA…GILA), 84 to 106 (GLAM…LIFL), 140 to 162 (LSTG…AELF), 167 to 186 (VFLL…ICFI), 217 to 239 (LFLT…ALYV), 248 to 270 (LLFV…AGVM), 306 to 328 (LGLY…NALL), 340 to 362 (VFAF…GSAV), and 366 to 388 (FGYH…FNLI).

This sequence belongs to the major facilitator superfamily. TCR/Tet family.

It is found in the cell membrane. Efflux pump for various substrates. This is Multi-drug resistance efflux pump PmrA (pmrA) from Streptococcus pneumoniae serotype 4 (strain ATCC BAA-334 / TIGR4).